We begin with the raw amino-acid sequence, 105 residues long: uncharacterized protein (105 aa).

A helical membrane pass occupies residues 29 to 49 (NAFLLILSEAYLLFVFLSYLI).

Its subcellular location is the membrane. This is an uncharacterized protein from Saccharomyces cerevisiae (strain ATCC 204508 / S288c) (Baker's yeast).